The sequence spans 794 residues: Potassium transporter 2 (794 aa).

Topologically, residues 1 to 21 (MDLNLGKCCGSRSSKKESWRS) are cytoplasmic. The chain crosses the membrane as a helical span at residues 22–42 (VLLLAYQSLGVVYGDLSISPL). Residues 43-64 (YVFKSTFAEDIQHSETNEEIYG) lie on the Extracellular side of the membrane. The helical transmembrane segment at 65–85 (VMSFVFWTLTLVPLLKYVFIV) threads the bilayer. The Cytoplasmic segment spans residues 86-153 (LRADDNGEGG…EKHKWLHTAL (68 aa)). A helical transmembrane segment spans residues 154–174 (LLLVLLGTCMVIGDGLLTPAI). Topologically, residues 175 to 193 (SVFSAVSGLELNMSKEHHQ) are extracellular. The helical transmembrane segment at 194 to 214 (YAVIPITCFILVCLFSLQHFG) threads the bilayer. Residues 215 to 217 (THR) are Cytoplasmic-facing. Residues 218-238 (VGFVFAPIVLTWLLCISGIGL) traverse the membrane as a helical segment. Topologically, residues 239–265 (YNIIQWNPHIYKALSPTYMFMFLRKTR) are extracellular. Residues 266 to 286 (VSGWMSLGGILLCITGAEAMF) traverse the membrane as a helical segment. Residues 287 to 294 (ADLGHFNY) lie on the Cytoplasmic side of the membrane. A helical transmembrane segment spans residues 295–315 (AAIQIAFTFLVYPALILAYMG). At 316–339 (QAAYLSRHHHSAHAIGFYVSVPKC) the chain is on the extracellular side. The helical transmembrane segment at 340-360 (LHWPVLAVAILASVVGSQAII) threads the bilayer. At 361–391 (SGTFSIINQSQSLGCFPRVKVIHTSDKMHGQ) the chain is on the cytoplasmic side. The chain crosses the membrane as a helical span at residues 392–412 (IYIPEINWMLMILCIAVTIGF). Over 413-417 (RDVKH) the chain is Extracellular. 2 helical membrane passes run 418–438 (LGNA…CLTS) and 439–459 (LVIV…LLFF). The Extracellular portion of the chain corresponds to 460-476 (GSIELLYFSASLTKFRE). The helical transmembrane segment at 477–497 (GAWLPILLSLIFMIIMFVWHY) threads the bilayer. Topologically, residues 498-794 (TTIKKYEFDL…LLEVGMVYVV (297 aa)) are cytoplasmic.

Belongs to the HAK/KUP transporter (TC 2.A.72.3) family. As to expression, slightly detected in roots, stems, leaves and flowers of mature plants and in potassium-starved plants.

The protein resides in the cell membrane. Low-affinity potassium transporter. Could mediate the potassium-dependent cell expansion in growing tissues. This chain is Potassium transporter 2 (POT2), found in Arabidopsis thaliana (Mouse-ear cress).